A 103-amino-acid chain; its full sequence is Large ribosomal subunit protein bL21 (103 aa).

Belongs to the bacterial ribosomal protein bL21 family. As to quaternary structure, part of the 50S ribosomal subunit. Contacts protein L20.

In terms of biological role, this protein binds to 23S rRNA in the presence of protein L20. This is Large ribosomal subunit protein bL21 from Kocuria rhizophila (strain ATCC 9341 / DSM 348 / NBRC 103217 / DC2201).